The following is a 76-amino-acid chain: Conotoxin Cal5a L2 (76 aa).

The N-terminal stretch at 1–22 (MRFYIGLMAALMLTSILRTDSA) is a signal peptide. Residues 23–42 (SVGQTGTKSELALIERVIRQ) constitute a propeptide that is removed on maturation. Pro-50 is modified (4-hydroxyproline). A 4-hydroxyproline; partial mark is found at Pro-58, Pro-62, and Pro-64.

Belongs to the conotoxin T superfamily. In terms of processing, contains 2 disulfide bonds that can be either 'C1-C3, C2-C4' or 'C1-C4, C2-C3', since these disulfide connectivities have been observed for conotoxins with cysteine framework V (for examples, see AC P0DQQ7 and AC P81755). Expressed by the venom duct.

It localises to the secreted. Functionally, probable neurotoxin with unknown target. Possibly targets ion channels. In Californiconus californicus (California cone), this protein is Conotoxin Cal5a L2.